The sequence spans 317 residues: Gluconeogenesis factor (317 aa).

It belongs to the gluconeogenesis factor family.

It localises to the cytoplasm. Its function is as follows. Required for morphogenesis under gluconeogenic growth conditions. Required, in gluconeogenic growth conditions, for the correct localization of PBP1 and hence for displaying a normal rod shape. The chain is Gluconeogenesis factor (mgfK) from Bacillus subtilis (strain 168).